Here is a 524-residue protein sequence, read N- to C-terminus: Light-independent protochlorophyllide reductase subunit B (524 aa).

A [4Fe-4S] cluster-binding site is contributed by Asp-36. Asp-290 serves as the catalytic Proton donor. 425-426 (GL) provides a ligand contact to substrate.

It belongs to the ChlB/BchB/BchZ family. As to quaternary structure, protochlorophyllide reductase is composed of three subunits; ChlL, ChlN and ChlB. Forms a heterotetramer of two ChlB and two ChlN subunits. [4Fe-4S] cluster serves as cofactor.

The enzyme catalyses chlorophyllide a + oxidized 2[4Fe-4S]-[ferredoxin] + 2 ADP + 2 phosphate = protochlorophyllide a + reduced 2[4Fe-4S]-[ferredoxin] + 2 ATP + 2 H2O. Its pathway is porphyrin-containing compound metabolism; chlorophyll biosynthesis (light-independent). In terms of biological role, component of the dark-operative protochlorophyllide reductase (DPOR) that uses Mg-ATP and reduced ferredoxin to reduce ring D of protochlorophyllide (Pchlide) to form chlorophyllide a (Chlide). This reaction is light-independent. The NB-protein (ChlN-ChlB) is the catalytic component of the complex. The chain is Light-independent protochlorophyllide reductase subunit B from Synechococcus sp. (strain CC9605).